A 591-amino-acid polypeptide reads, in one-letter code: MHAYRSHTCAELNAGHVGQEVRLSGWVHRVRDHGGVLFIDLRDHYGITQVIADADSPAFAELETVRAEWVIRIEGRVKGRDAALVNPKLATGEIEVYATGLTVLGAADELPMPVFGEVDYPEETRLTYRFLDLRREKLHANMMLRSNVVRSLRNRMWDAGFNEFQTPIITASSPEGARDFLVPSRLHPGKFYALPQAPQQFKQLIMVAGFDRYFQIAPCFRDEDPRADRSPTDFYQLDVEMSFVEQEDVFRAVQPVIRGIFEEFGGGRRVDADWPRIAYRDAMLWYGSDKPDLRNPIKMQVVSEHFRGSGFAIFAKLLENEGTEIRAIPAPTGGSRKFCDRMNAFAQSQGLPGMGYIFWRKGDDGAMEAAGPLAKNIGPERTEAIRQQLGLGEGDAAFFLGGKPETFEAVAGRARNEIGRELGLTEENCFRFAWIVDFPMYEKDDEGKVDFSHNPFSMPQGGMAALEGDPLKVLAYQYDLACNGYELISGGIRNHKPEIMFKAFELAGYPASEVEKRFGGMVKAFRYGAPPHGGCAAGIDRIVMLLADEANIREVIMFPMNQRAEDLLMGAPSEPTNEQLRELRLRVVPKD.

Glu175 contributes to the L-aspartate binding site. The interval 199 to 202 is aspartate; sequence QQFK. Arg221 and His453 together coordinate L-aspartate. ATP is bound at residue 221-223; it reads RDE. Glu486 lines the ATP pocket. Arg493 serves as a coordination point for L-aspartate. 538 to 541 contacts ATP; sequence GIDR.

It belongs to the class-II aminoacyl-tRNA synthetase family. Type 1 subfamily. In terms of assembly, homodimer.

It is found in the cytoplasm. It carries out the reaction tRNA(Asx) + L-aspartate + ATP = L-aspartyl-tRNA(Asx) + AMP + diphosphate. In terms of biological role, aspartyl-tRNA synthetase with relaxed tRNA specificity since it is able to aspartylate not only its cognate tRNA(Asp) but also tRNA(Asn). Reaction proceeds in two steps: L-aspartate is first activated by ATP to form Asp-AMP and then transferred to the acceptor end of tRNA(Asp/Asn). This is Aspartate--tRNA(Asp/Asn) ligase from Cereibacter sphaeroides (strain ATCC 17025 / ATH 2.4.3) (Rhodobacter sphaeroides).